The following is a 105-amino-acid chain: UPF0148 protein PYRAB12700 (105 aa).

It belongs to the UPF0148 family.

The polypeptide is UPF0148 protein PYRAB12700 (Pyrococcus abyssi (strain GE5 / Orsay)).